The following is a 135-amino-acid chain: MEVLPKALEVDERSPESKDLLPSQTASSLCISSRSESVWTTTPKSNWEIYHKPIIIMSVGAAILLFGVAITCVAYILEEKHKVVQVLRMIGPAFLSLGLMMLVCGLVWVPIIKKKQKQRQKSNFFQSLKFFLLNR.

Residues 1–21 (MEVLPKALEVDERSPESKDLL) are disordered. The segment covering 8–19 (LEVDERSPESKD) has biased composition (basic and acidic residues). 2 helical membrane-spanning segments follow: residues 54 to 74 (IIIMSVGAAILLFGVAITCVA) and 92 to 112 (PAFLSLGLMMLVCGLVWVPII).

Interacts with TRPV1. Strongly expressed in most dorsal root ganglia (DRG) and trigeminal neurons. Expressed by most peptidergic (CGRP+) and non-peptidergic (IB4+) DRG neurons. Weakly expressed in other parts of the peripheral nervous system (PNS) including sympathetic and enteric neurons. Not expressed in the spinal cord.

The protein resides in the membrane. Functionally, regulatory subunit of TRPV1, a molecular sensor of noxious heat and capsaicin. Positively regulates TRPV1 channel activity via phosphatidylinositol 4,5-bisphosphate (PIP2). Binds various phosphoinositide, including phosphatidylinositol 4,5-bisphosphate (PIP2), but not phosphatidylinositol (PI). This chain is Phosphoinositide-interacting protein (Pirt), found in Mus musculus (Mouse).